The chain runs to 138 residues: MTATFLMSLLFGLAFGQTMSLCVPTGYTMHIERRECAYCLTINTTICAGYCMTRDSNGKLFLPKSALSQDVCTYRDVIYRTVVMPGCPPHVIPYISYPVAVSCRCGKCNTDYIDCIHESVTTNYCTKPQKPYLVGFPV.

The first 20 residues, methionine 1–serine 20, serve as a signal peptide directing secretion. 6 disulfides stabilise this stretch: cysteine 22-cysteine 72, cysteine 36-cysteine 87, cysteine 39-cysteine 125, cysteine 47-cysteine 103, cysteine 51-cysteine 105, and cysteine 108-cysteine 115. The N-linked (GlcNAc...) asparagine glycan is linked to asparagine 43. Residues leucine 133–valine 138 constitute a propeptide that is removed on maturation.

Belongs to the glycoprotein hormones subunit beta family. In terms of assembly, heterodimer of a common alpha chain and a unique beta chain which confers biological specificity to thyrotropin, lutropin, follitropin and gonadotropin.

Its subcellular location is the secreted. Indispensable for the control of thyroid structure and metabolism. This is Thyrotropin subunit beta (TSHB) from Monodelphis domestica (Gray short-tailed opossum).